Here is a 150-residue protein sequence, read N- to C-terminus: Large ribosomal subunit protein uL11 (150 aa).

Residues 83 to 111 (AAGLKPQGKRNRAKGSEKPGRQTAGTVTA) are disordered.

The protein belongs to the universal ribosomal protein uL11 family. Part of the ribosomal stalk of the 50S ribosomal subunit. Interacts with L10 and the large rRNA to form the base of the stalk. L10 forms an elongated spine to which L12 dimers bind in a sequential fashion forming a multimeric L10(L12)X complex. In terms of processing, one or more lysine residues are methylated.

Functionally, forms part of the ribosomal stalk which helps the ribosome interact with GTP-bound translation factors. The protein is Large ribosomal subunit protein uL11 of Paracoccus denitrificans (strain Pd 1222).